The sequence spans 136 residues: Small ribosomal subunit protein uS8 (136 aa).

This sequence belongs to the universal ribosomal protein uS8 family. As to quaternary structure, part of the 30S ribosomal subunit. Contacts proteins S5 and S12.

Its function is as follows. One of the primary rRNA binding proteins, it binds directly to 16S rRNA central domain where it helps coordinate assembly of the platform of the 30S subunit. In Persephonella marina (strain DSM 14350 / EX-H1), this protein is Small ribosomal subunit protein uS8.